A 603-amino-acid polypeptide reads, in one-letter code: Proline--tRNA ligase (603 aa).

Belongs to the class-II aminoacyl-tRNA synthetase family. ProS type 1 subfamily. In terms of assembly, homodimer.

The protein localises to the cytoplasm. It carries out the reaction tRNA(Pro) + L-proline + ATP = L-prolyl-tRNA(Pro) + AMP + diphosphate. In terms of biological role, catalyzes the attachment of proline to tRNA(Pro) in a two-step reaction: proline is first activated by ATP to form Pro-AMP and then transferred to the acceptor end of tRNA(Pro). As ProRS can inadvertently accommodate and process non-cognate amino acids such as alanine and cysteine, to avoid such errors it has two additional distinct editing activities against alanine. One activity is designated as 'pretransfer' editing and involves the tRNA(Pro)-independent hydrolysis of activated Ala-AMP. The other activity is designated 'posttransfer' editing and involves deacylation of mischarged Ala-tRNA(Pro). The misacylated Cys-tRNA(Pro) is not edited by ProRS. The protein is Proline--tRNA ligase of Microcystis aeruginosa (strain NIES-843 / IAM M-2473).